Reading from the N-terminus, the 298-residue chain is Thymidylate synthase (298 aa).

Residues Arg25 and 159-160 (RR) each bind dUMP. The active-site Nucleophile is the Cys179. Residues 200–203 (RSCD), Asn211, and 241–243 (HLY) contribute to the dUMP site. Asp203 contacts (6R)-5,10-methylene-5,6,7,8-tetrahydrofolate. Ala297 is a (6R)-5,10-methylene-5,6,7,8-tetrahydrofolate binding site.

This sequence belongs to the thymidylate synthase family. Bacterial-type ThyA subfamily. In terms of assembly, homodimer.

The protein resides in the cytoplasm. The enzyme catalyses dUMP + (6R)-5,10-methylene-5,6,7,8-tetrahydrofolate = 7,8-dihydrofolate + dTMP. The protein operates within pyrimidine metabolism; dTTP biosynthesis. Catalyzes the reductive methylation of 2'-deoxyuridine-5'-monophosphate (dUMP) to 2'-deoxythymidine-5'-monophosphate (dTMP) while utilizing 5,10-methylenetetrahydrofolate (mTHF) as the methyl donor and reductant in the reaction, yielding dihydrofolate (DHF) as a by-product. This enzymatic reaction provides an intracellular de novo source of dTMP, an essential precursor for DNA biosynthesis. The polypeptide is Thymidylate synthase (Rhodopseudomonas palustris (strain BisA53)).